Consider the following 256-residue polypeptide: uncharacterized protein (256 aa).

Residues 1-23 form the signal peptide; the sequence is MKRLNKLVLGIIFLFLVISITAG. The N-palmitoyl cysteine moiety is linked to residue Cys24. A lipid anchor (S-diacylglycerol cysteine) is attached at Cys24.

It belongs to the staphylococcal tandem lipoprotein family.

The protein localises to the cell membrane. This is an uncharacterized protein from Staphylococcus aureus (strain COL).